The sequence spans 430 residues: Glutamate-1-semialdehyde 2,1-aminomutase (430 aa).

An N6-(pyridoxal phosphate)lysine modification is found at K266.

It belongs to the class-III pyridoxal-phosphate-dependent aminotransferase family. HemL subfamily. Homodimer. Requires pyridoxal 5'-phosphate as cofactor.

Its subcellular location is the cytoplasm. It carries out the reaction (S)-4-amino-5-oxopentanoate = 5-aminolevulinate. It participates in porphyrin-containing compound metabolism; protoporphyrin-IX biosynthesis; 5-aminolevulinate from L-glutamyl-tRNA(Glu): step 2/2. This is Glutamate-1-semialdehyde 2,1-aminomutase from Acidithiobacillus ferrooxidans (strain ATCC 23270 / DSM 14882 / CIP 104768 / NCIMB 8455) (Ferrobacillus ferrooxidans (strain ATCC 23270)).